The sequence spans 408 residues: UDP-N-acetylglucosamine--dolichyl-phosphate N-acetylglucosaminephosphotransferase (408 aa).

At 1 to 10 (MWAFPELPLP) the chain is on the lumenal side. A helical membrane pass occupies residues 11–38 (LLVNLFGSLLGFVATVTLIPAFRSHFIA). The Cytoplasmic portion of the chain corresponds to 39 to 58 (ARLCGQDLNKLSRQQIPESQ). Residues 44 to 46 (QDL) and Glu-56 contribute to the UDP-N-acetyl-alpha-D-glucosamine site. A helical transmembrane segment spans residues 59–78 (GVICGAVFLIILFCFIPFPF). Residues 79-91 (LNCFVEEQCKAFP) lie on the Lumenal side of the membrane. A helical membrane pass occupies residues 92–118 (HHEFVALIGALLAICCMIFLGFADDVL). The Cytoplasmic portion of the chain corresponds to 119–121 (NLP). The chain crosses the membrane as a helical span at residues 122–143 (WRHKLLLPTAASLPLLMVYFTN). Lys-125 provides a ligand contact to dolichyl phosphate. The Lumenal portion of the chain corresponds to 144–166 (FGNTTIVVPKPFRWILGLHLDLG). N-linked (GlcNAc...) asparagine glycosylation occurs at Asn-146. Residues 167 to 186 (ILYYVYMGLLAVFCTNAINI) form a helical membrane-spanning segment. Dolichyl phosphate is bound at residue 178–186 (VFCTNAINI). Asn-185 contributes to the Mg(2+) binding site. Over 187–192 (LAGING) the chain is Cytoplasmic. Asn-191 provides a ligand contact to UDP-N-acetyl-alpha-D-glucosamine. A helical membrane pass occupies residues 193 to 213 (LEAGQSLVISASIIVFNLVEL). Topologically, residues 214-218 (EGDYR) are lumenal. A helical transmembrane segment spans residues 219–242 (DDHVFSLYFMIPFFFTTLGLLYHN). Residues 243-250 (WYPSQVFV) are Cytoplasmic-facing. Residues 251-269 (GDTFCYFAGMTFAVVGILG) form a helical membrane-spanning segment. Asp-252 contributes to the Mg(2+) binding site. Over 270–271 (HF) the chain is Lumenal. A helical transmembrane segment spans residues 272 to 293 (SKTMLLFFIPQVFNFLYSLPQL). The Cytoplasmic portion of the chain corresponds to 294 to 375 (LHAIPCPRHR…LLLKIFGPIH (82 aa)). UDP-N-acetyl-alpha-D-glucosamine is bound at residue 301 to 303 (RHR). Residues 376–400 (ERNLTLLLLLLQILSSAVTFSIRYQ) form a helical membrane-spanning segment. Over 401 to 408 (LVRLFYDV) the chain is Lumenal.

The protein belongs to the glycosyltransferase 4 family. In terms of assembly, homodimer. The cofactor is Mg(2+).

It localises to the endoplasmic reticulum membrane. The catalysed reaction is a di-trans,poly-cis-dolichyl phosphate + UDP-N-acetyl-alpha-D-glucosamine = an N-acetyl-alpha-D-glucosaminyl-diphospho-di-trans,poly-cis-dolichol + UMP. Its pathway is protein modification; protein glycosylation. Inhibited by natural nucleoside antibiotic tunicamycin, which acts as a structural analog and competitor of UDP-GlcNAc. Its function is as follows. UDP-N-acetylglucosamine--dolichyl-phosphate N-acetylglucosaminephosphotransferase that operates in the biosynthetic pathway of dolichol-linked oligosaccharides, the glycan precursors employed in protein asparagine (N)-glycosylation. The assembly of dolichol-linked oligosaccharides begins on the cytosolic side of the endoplasmic reticulum membrane and finishes in its lumen. The sequential addition of sugars to dolichol pyrophosphate produces dolichol-linked oligosaccharides containing fourteen sugars, including two GlcNAcs, nine mannoses and three glucoses. Once assembled, the oligosaccharide is transferred from the lipid to nascent proteins by oligosaccharyltransferases. Catalyzes the initial step of dolichol-linked oligosaccharide biosynthesis, transfering GlcNAc-1-P from cytosolic UDP-GlcNAc onto the carrier lipid dolichyl phosphate (P-dolichol), yielding GlcNAc-P-P-dolichol embedded in the cytoplasmic leaflet of the endoplasmic reticulum membrane. This Cricetulus longicaudatus (Long-tailed dwarf hamster) protein is UDP-N-acetylglucosamine--dolichyl-phosphate N-acetylglucosaminephosphotransferase (DPAGT1).